Consider the following 85-residue polypeptide: Beta-defensin 18 (85 aa).

The signal sequence occupies residues 1–23; that stretch reads MQSAMKLFFIFLIFVFSVSCGPS. Intrachain disulfides connect cysteine 39–cysteine 65, cysteine 46–cysteine 60, and cysteine 50–cysteine 66.

It belongs to the beta-defensin family.

The protein localises to the secreted. In terms of biological role, has antibacterial activity. The chain is Beta-defensin 18 (Defb18) from Rattus norvegicus (Rat).